A 268-amino-acid chain; its full sequence is Tryptophan synthase alpha chain (268 aa).

Active-site proton acceptor residues include Glu49 and Asp60.

The protein belongs to the TrpA family. As to quaternary structure, tetramer of two alpha and two beta chains.

It carries out the reaction (1S,2R)-1-C-(indol-3-yl)glycerol 3-phosphate + L-serine = D-glyceraldehyde 3-phosphate + L-tryptophan + H2O. It functions in the pathway amino-acid biosynthesis; L-tryptophan biosynthesis; L-tryptophan from chorismate: step 5/5. In terms of biological role, the alpha subunit is responsible for the aldol cleavage of indoleglycerol phosphate to indole and glyceraldehyde 3-phosphate. This chain is Tryptophan synthase alpha chain, found in Mannheimia succiniciproducens (strain KCTC 0769BP / MBEL55E).